A 338-amino-acid polypeptide reads, in one-letter code: Fructose-1,6-bisphosphatase 1 (338 aa).

Position 2 is an N-acetylthreonine (threonine 2). Residues 18-22 (VMEEG) and 28-32 (TGEMT) each bind AMP. Residues aspartate 69 and glutamate 98 each contribute to the Mg(2+) site. Residue 113 to 114 (KY) coordinates AMP. Residues aspartate 119, leucine 121, and aspartate 122 each contribute to the Mg(2+) site. A substrate-binding site is contributed by 122 to 125 (DGSS). An AMP-binding site is contributed by lysine 141. At lysine 151 the chain carries N6-succinyllysine. At serine 208 the chain carries Phosphoserine. Residues 213-216 (NEGY), 244-249 (RYVGSM), tyrosine 265, and 275-277 (KLR) each bind substrate. Residues tyrosine 216, tyrosine 245, and tyrosine 265 each carry the phosphotyrosine modification. Residue glutamate 281 coordinates Mg(2+).

This sequence belongs to the FBPase class 1 family. In terms of assembly, homotetramer. Mg(2+) is required as a cofactor.

It carries out the reaction beta-D-fructose 1,6-bisphosphate + H2O = beta-D-fructose 6-phosphate + phosphate. It functions in the pathway carbohydrate biosynthesis; gluconeogenesis. Subject to complex allosteric regulation. The enzyme can assume an active R-state, or an inactive T-state. Intermediate conformations may exist. AMP acts as an allosteric inhibitor. AMP binding affects the turnover of bound substrate and not the affinity for substrate. Fructose 2,6-bisphosphate acts as a competitive inhibitor. Fructose 2,6-bisphosphate and AMP have synergistic effects. Catalyzes the hydrolysis of fructose 1,6-bisphosphate to fructose 6-phosphate in the presence of divalent cations, acting as a rate-limiting enzyme in gluconeogenesis. Plays a role in regulating glucose sensing and insulin secretion of pancreatic beta-cells. Appears to modulate glycerol gluconeogenesis in liver. Important regulator of appetite and adiposity; increased expression of the protein in liver after nutrient excess increases circulating satiety hormones and reduces appetite-stimulating neuropeptides and thus seems to provide a feedback mechanism to limit weight gain. The polypeptide is Fructose-1,6-bisphosphatase 1 (FBP1) (Bos taurus (Bovine)).